Consider the following 587-residue polypeptide: Putative adenylate cyclase 3 (587 aa).

The Guanylate cyclase domain occupies 12–127 (AILAADAVGY…DGVNVAARIE (116 aa)). TPR repeat units lie at residues 343–376 (LLVRSRQAILQFNALSSMEARRMLHRVLEIDPGM), 421–454 (PQGHYTLALALSWMRRLDEAEHAAERAIELDPNS), 455–488 (ANAYTALGTIRDFQGRHEEALALYTRAHRLDPQF), 490–522 (LSLHFQGRALLNLGRFDEAEVAFKRRLLLAPRS), and 524–556 (MTRFYLACLYGRTGRHEEARGYWREVLGVNPSF).

Belongs to the adenylyl cyclase class-3 family.

It carries out the reaction ATP = 3',5'-cyclic AMP + diphosphate. This chain is Putative adenylate cyclase 3 (cya3), found in Rhizobium meliloti (strain 1021) (Ensifer meliloti).